The sequence spans 476 residues: Cysteine--tRNA ligase (476 aa).

C28 lines the Zn(2+) pocket. Positions 30–40 (PTVYDNTHLGH) match the 'HIGH' region motif. Zn(2+)-binding residues include C208, H233, and E237. Positions 265-269 (KMSKS) match the 'KMSKS' region motif. K268 lines the ATP pocket.

It belongs to the class-I aminoacyl-tRNA synthetase family. It depends on Zn(2+) as a cofactor.

The protein localises to the cytoplasm. It catalyses the reaction tRNA(Cys) + L-cysteine + ATP = L-cysteinyl-tRNA(Cys) + AMP + diphosphate. This Methanococcus maripaludis (strain DSM 14266 / JCM 13030 / NBRC 101832 / S2 / LL) protein is Cysteine--tRNA ligase.